We begin with the raw amino-acid sequence, 233 residues long: Superoxide dismutase [Mn], mitochondrial (233 aa).

A mitochondrion-targeting transit peptide spans 1 to 26 (MFAKTAAANLTKKGGLSLLSTTARRT). Histidine 52 and histidine 107 together coordinate Mn(2+). A phosphothreonine mark is found at threonine 147 and threonine 149. Positions 194 and 198 each coordinate Mn(2+).

Belongs to the iron/manganese superoxide dismutase family. In terms of assembly, homotetramer. The cofactor is Mn(2+).

The protein resides in the mitochondrion matrix. The enzyme catalyses 2 superoxide + 2 H(+) = H2O2 + O2. Destroys superoxide anion radicals which are normally produced within the cells and which are toxic to biological systems. The chain is Superoxide dismutase [Mn], mitochondrial (SOD2) from Saccharomyces cerevisiae (strain ATCC 204508 / S288c) (Baker's yeast).